The chain runs to 83 residues: Protein FAM240A (83 aa).

It belongs to the FAM240 family.

In Homo sapiens (Human), this protein is Protein FAM240A.